The following is a 95-amino-acid chain: Nucleoid-associated protein MMOB0740 (95 aa).

It belongs to the YbaB/EbfC family. As to quaternary structure, homodimer.

The protein resides in the cytoplasm. It localises to the nucleoid. In terms of biological role, binds to DNA and alters its conformation. May be involved in regulation of gene expression, nucleoid organization and DNA protection. The chain is Nucleoid-associated protein MMOB0740 from Mycoplasma mobile (strain ATCC 43663 / 163K / NCTC 11711) (Mesomycoplasma mobile).